The sequence spans 451 residues: Trigger factor (451 aa).

One can recognise a PPIase FKBP-type domain in the interval 165–250 (DDKLTIDFEG…LHQIQVREAL (86 aa)).

This sequence belongs to the FKBP-type PPIase family. Tig subfamily.

The protein localises to the cytoplasm. The catalysed reaction is [protein]-peptidylproline (omega=180) = [protein]-peptidylproline (omega=0). Its function is as follows. Involved in protein export. Acts as a chaperone by maintaining the newly synthesized protein in an open conformation. Functions as a peptidyl-prolyl cis-trans isomerase. The polypeptide is Trigger factor (Helicobacter pylori (strain P12)).